A 196-amino-acid chain; its full sequence is ATP-dependent Clp protease proteolytic subunit (196 aa).

Residue Ser99 is the Nucleophile of the active site. His124 is a catalytic residue.

The protein belongs to the peptidase S14 family. Fourteen ClpP subunits assemble into 2 heptameric rings which stack back to back to give a disk-like structure with a central cavity, resembling the structure of eukaryotic proteasomes.

It localises to the cytoplasm. The enzyme catalyses Hydrolysis of proteins to small peptides in the presence of ATP and magnesium. alpha-casein is the usual test substrate. In the absence of ATP, only oligopeptides shorter than five residues are hydrolyzed (such as succinyl-Leu-Tyr-|-NHMec, and Leu-Tyr-Leu-|-Tyr-Trp, in which cleavage of the -Tyr-|-Leu- and -Tyr-|-Trp bonds also occurs).. Cleaves peptides in various proteins in a process that requires ATP hydrolysis. Has a chymotrypsin-like activity. Plays a major role in the degradation of misfolded proteins. In Campylobacter lari (strain RM2100 / D67 / ATCC BAA-1060), this protein is ATP-dependent Clp protease proteolytic subunit.